A 137-amino-acid chain; its full sequence is uncharacterized protein (137 aa).

The N-terminal stretch at methionine 1–alanine 34 is a signal peptide. The segment covering leucine 33–threonine 45 has biased composition (polar residues). 2 disordered regions span residues leucine 33–serine 54 and valine 98–serine 137. A glycan (N-linked (GlcNAc...) asparagine) is linked at asparagine 40. Residues lysine 121–serine 137 show a composition bias toward basic and acidic residues.

It is found in the secreted. This is an uncharacterized protein from Homo sapiens (Human).